Consider the following 680-residue polypeptide: WD repeat-containing protein 48 homolog (680 aa).

8 WD repeats span residues 26-65, 71-110, 113-152, 164-203, 206-245, 248-287, 290-329, and 350-389; these read QHRN…SEKY, HHND…CMST, THRD…ALTA, GSKD…RSMK, GHTE…CVQT, VHKE…NKTL, EEKA…RGTL, and KGGA…KKDT. Positions 594–618 are disordered; sequence TPSGANANNSLQNSQSDGNSEGSQL. Residues 596-609 are compositionally biased toward low complexity; that stretch reads SGANANNSLQNSQS.

It belongs to the WD repeat WDR48 family. Catalytic component of the Usp12-46 deubiquitylase complex consisting of Usp12-46, Wdr20 and Uaf1; regulatory subunit that, together wtih Wdr20, stabilizes Usp12-46. The Usp12-46 deubiquitylase complex associates with arr/arrow; the interaction leads to deubiquitination and stabilization of arr/arrow.

Its function is as follows. Regulatory component of the Usp12-46 deubiquitylase complex. activates deubiquitination by increasing the catalytic turnover without increasing the affinity of deubiquitinating enzymes for the substrate. The complex deubiquitylates the wg/wingless-signaling receptor arr/arrow, which stabilizes the receptor and increases its concentration at the cell surface; this enhances the sensitivity of cells to wg/wingless-signal stimulation. This increases the amplitude and spatial range of the signaling response to the wg/wingless morphogen gradient, facilitating the precise concentration-dependent regulation of its target genes. Together with Wdr20 and Usp12-46 required for wg/wingless-mediated signaling in the wing imaginal disc and for wg/wingless-dependent regulation of intestinal stem cell proliferation. In Drosophila persimilis (Fruit fly), this protein is WD repeat-containing protein 48 homolog.